The sequence spans 1317 residues: DNA-directed RNA polymerase subunit beta' (1317 aa).

Zn(2+) is bound by residues cysteine 60, cysteine 62, cysteine 75, and cysteine 78. Mg(2+)-binding residues include aspartate 535, aspartate 537, and aspartate 539. Zn(2+) is bound by residues cysteine 890, cysteine 967, cysteine 974, and cysteine 977.

This sequence belongs to the RNA polymerase beta' chain family. As to quaternary structure, the RNAP catalytic core consists of 2 alpha, 1 beta, 1 beta' and 1 omega subunit. When a sigma factor is associated with the core the holoenzyme is formed, which can initiate transcription. Mg(2+) is required as a cofactor. Requires Zn(2+) as cofactor.

It carries out the reaction RNA(n) + a ribonucleoside 5'-triphosphate = RNA(n+1) + diphosphate. Functionally, DNA-dependent RNA polymerase catalyzes the transcription of DNA into RNA using the four ribonucleoside triphosphates as substrates. The chain is DNA-directed RNA polymerase subunit beta' from Nocardia farcinica (strain IFM 10152).